The sequence spans 478 residues: Poly(A) RNA polymerase cid11 (478 aa).

Asp-106 and Asp-108 together coordinate Mg(2+). The region spanning 263–317 is the PAP-associated domain; it reads SLGRLLIDFFYYYGFSFNYLDSVVSVRSGTVLNKQEKGWAMEVNNSLCVEEPFNT. Positions 428 to 447 are disordered; the sequence is QSYENKANRDSDFQGQTSLT.

It belongs to the DNA polymerase type-B-like family. Mg(2+) serves as cofactor. It depends on Mn(2+) as a cofactor.

The protein localises to the cytoplasm. It localises to the nucleus. It catalyses the reaction RNA(n) + ATP = RNA(n)-3'-adenine ribonucleotide + diphosphate. This chain is Poly(A) RNA polymerase cid11 (cid11), found in Schizosaccharomyces pombe (strain 972 / ATCC 24843) (Fission yeast).